Consider the following 253-residue polypeptide: Tryptophan synthase alpha chain (253 aa).

Catalysis depends on proton acceptor residues Glu-47 and Asp-58.

The protein belongs to the TrpA family. As to quaternary structure, tetramer of two alpha and two beta chains.

It carries out the reaction (1S,2R)-1-C-(indol-3-yl)glycerol 3-phosphate + L-serine = D-glyceraldehyde 3-phosphate + L-tryptophan + H2O. The protein operates within amino-acid biosynthesis; L-tryptophan biosynthesis; L-tryptophan from chorismate: step 5/5. In terms of biological role, the alpha subunit is responsible for the aldol cleavage of indoleglycerol phosphate to indole and glyceraldehyde 3-phosphate. This is Tryptophan synthase alpha chain from Syntrophotalea carbinolica (strain DSM 2380 / NBRC 103641 / GraBd1) (Pelobacter carbinolicus).